The following is a 438-amino-acid chain: Ribosomal protein uS12 methylthiotransferase RimO (438 aa).

Residues 1–116 (MNVGFISLGC…IWKEIENLLD (116 aa)) form the MTTase N-terminal domain. Residues cysteine 10, cysteine 46, cysteine 79, cysteine 147, cysteine 151, and cysteine 154 each coordinate [4Fe-4S] cluster. Positions 133–363 (TTGSNMAYLK…MALQEKISRE (231 aa)) constitute a Radical SAM core domain. The TRAM domain occupies 366 to 435 (EQKVGNVYKV…DYDLFGELYT (70 aa)).

It belongs to the methylthiotransferase family. RimO subfamily. It depends on [4Fe-4S] cluster as a cofactor.

The protein resides in the cytoplasm. It carries out the reaction L-aspartate(89)-[ribosomal protein uS12]-hydrogen + (sulfur carrier)-SH + AH2 + 2 S-adenosyl-L-methionine = 3-methylsulfanyl-L-aspartate(89)-[ribosomal protein uS12]-hydrogen + (sulfur carrier)-H + 5'-deoxyadenosine + L-methionine + A + S-adenosyl-L-homocysteine + 2 H(+). Functionally, catalyzes the methylthiolation of an aspartic acid residue of ribosomal protein uS12. The protein is Ribosomal protein uS12 methylthiotransferase RimO of Alkaliphilus oremlandii (strain OhILAs) (Clostridium oremlandii (strain OhILAs)).